Consider the following 422-residue polypeptide: Hexuronate transporter (422 aa).

The next 11 helical transmembrane spans lie at 9-29, 45-65, 82-102, 141-161, 163-183, 219-239, 256-276, 294-314, 321-341, 356-376, and 381-401; these read VILF…ALSI, MGLI…LGGV, VWSL…LLII, TPLG…AFSW, VSFV…FKFV, LFTA…LTWF, VITV…GFVS, VVLV…GLVA, TLVA…WAVI, FMHF…GFIV, and TFSG…LAVI.

The protein belongs to the major facilitator superfamily. Phthalate permease family.

Its subcellular location is the cell membrane. It catalyses the reaction aldehydo-D-glucuronate(in) + H(+)(in) = aldehydo-D-glucuronate(out) + H(+)(out). It carries out the reaction aldehydo-D-galacturonate(out) + H(+)(out) = aldehydo-D-galacturonate(in) + H(+)(in). Functionally, transport of aldohexuronates such as D-glucuronate and D-galacturonate. The sequence is that of Hexuronate transporter from Bacillus subtilis (strain 168).